The chain runs to 212 residues: ATP phosphoribosyltransferase (212 aa).

The protein belongs to the ATP phosphoribosyltransferase family. Short subfamily. As to quaternary structure, heteromultimer composed of HisG and HisZ subunits.

The protein resides in the cytoplasm. It carries out the reaction 1-(5-phospho-beta-D-ribosyl)-ATP + diphosphate = 5-phospho-alpha-D-ribose 1-diphosphate + ATP. The protein operates within amino-acid biosynthesis; L-histidine biosynthesis; L-histidine from 5-phospho-alpha-D-ribose 1-diphosphate: step 1/9. Its function is as follows. Catalyzes the condensation of ATP and 5-phosphoribose 1-diphosphate to form N'-(5'-phosphoribosyl)-ATP (PR-ATP). Has a crucial role in the pathway because the rate of histidine biosynthesis seems to be controlled primarily by regulation of HisG enzymatic activity. This chain is ATP phosphoribosyltransferase, found in Prochlorococcus marinus (strain MIT 9301).